We begin with the raw amino-acid sequence, 162 residues long: MHMRLVVIAIGRLKQGPERQLAERYRERFDDIGRKLGFRGLDIHEIPESRARDAATRMAEEAAAIAAAIPDNSMLVCLDERGHNIDSATFAGHIGRWRDEGVAATAFVIGGADGLSPELRRKAKLGVAFGAATWPHQIVRVLLLEQIYRTATILAGHPYHRA.

2 residues coordinate S-adenosyl-L-methionine: leucine 78 and glycine 110.

The protein belongs to the RNA methyltransferase RlmH family. In terms of assembly, homodimer.

It localises to the cytoplasm. It catalyses the reaction pseudouridine(1915) in 23S rRNA + S-adenosyl-L-methionine = N(3)-methylpseudouridine(1915) in 23S rRNA + S-adenosyl-L-homocysteine + H(+). Specifically methylates the pseudouridine at position 1915 (m3Psi1915) in 23S rRNA. The sequence is that of Ribosomal RNA large subunit methyltransferase H from Bradyrhizobium sp. (strain ORS 278).